Reading from the N-terminus, the 443-residue chain is Glutamate--tRNA ligase 2 (443 aa).

The 'HIGH' region motif lies at 7-17; it reads PSPTGYLHVGN. The short motif at 236–240 is the 'KMSKS' region element; that stretch reads KISKR. Lys-239 serves as a coordination point for ATP.

It belongs to the class-I aminoacyl-tRNA synthetase family. Glutamate--tRNA ligase type 1 subfamily. In terms of assembly, monomer.

The protein localises to the cytoplasm. The enzyme catalyses tRNA(Glu) + L-glutamate + ATP = L-glutamyl-tRNA(Glu) + AMP + diphosphate. In terms of biological role, catalyzes the attachment of glutamate to tRNA(Glu) in a two-step reaction: glutamate is first activated by ATP to form Glu-AMP and then transferred to the acceptor end of tRNA(Glu). In Ehrlichia canis (strain Jake), this protein is Glutamate--tRNA ligase 2.